The following is a 280-amino-acid chain: Probable endonuclease 4 (280 aa).

Residues histidine 68, histidine 108, glutamate 143, aspartate 177, histidine 180, histidine 214, aspartate 227, histidine 229, and glutamate 259 each coordinate Zn(2+).

This sequence belongs to the AP endonuclease 2 family. Zn(2+) serves as cofactor.

It catalyses the reaction Endonucleolytic cleavage to 5'-phosphooligonucleotide end-products.. Functionally, endonuclease IV plays a role in DNA repair. It cleaves phosphodiester bonds at apurinic or apyrimidinic (AP) sites, generating a 3'-hydroxyl group and a 5'-terminal sugar phosphate. The polypeptide is Probable endonuclease 4 (Cenarchaeum symbiosum (strain A)).